The primary structure comprises 742 residues: Zinc transporter ZIP6 (742 aa).

Residues 1–353 (MMTFLCTRSG…QRNTPVYIAW (353 aa)) lie on the Extracellular side of the membrane. N-linked (GlcNAc...) asparagine glycans are attached at residues Asn-94 and Asn-127. Disordered stretches follow at residues 148 to 182 (PVTT…SQSD) and 191 to 210 (MNQE…RSRR). Residues 152–165 (KKGDMDHSVEKSDP) show a composition bias toward basic and acidic residues. Over residues 192 to 206 (NQESTTALTTPSYVT) the composition is skewed to polar residues. Asn-212, Asn-232, and Asn-237 each carry an N-linked (GlcNAc...) asparagine glycan. A disordered region spans residues 220–260 (TQDHASFSPSQPNVTHSNHTHHDEDTPTHQHDDHDEHEHAR). Residues 222-236 (DHASFSPSQPNVTHS) are compositionally biased toward polar residues. Basic and acidic residues predominate over residues 239-260 (THHDEDTPTHQHDDHDEHEHAR). N-linked (GlcNAc...) asparagine glycans are attached at residues Asn-267 and Asn-337. The interval 310–342 (EDEHSDHSHHHKHHHHHHDHQHLQHPHNHTNGR) is disordered. A compositionally biased stretch (basic residues) spans 316–339 (HSHHHKHHHHHHDHQHLQHPHNHT). A helical transmembrane segment spans residues 354–374 (LGGFLSITLISLLALVGVVLI). Topologically, residues 375–385 (PLMNRVCFNFL) are cytoplasmic. A helical transmembrane segment spans residues 386 to 406 (LSFLVALAVGTLSGDALLHLI). The Extracellular segment spans residues 407–430 (PHSQGHHHHGHSEEHAEEEDSLRP). A helical transmembrane segment spans residues 431 to 451 (VWTGLTALSGVYIMFLIEHFL). Residues 452–644 (TLGKMYKDKN…LKAGMSVRQA (193 aa)) are Cytoplasmic-facing. A helical membrane pass occupies residues 645–665 (MLYNLLSALMGYLGMIIGILI). At 666-671 (GHYAEN) the chain is on the extracellular side. The chain crosses the membrane as a helical span at residues 672–692 (VATWIFALTAGLFMYVALVDM). The Cytoplasmic segment spans residues 693–710 (VPEMLHNDASEAGFSHYG). A helical membrane pass occupies residues 711–731 (FFLLQNAGILLGFGIMLIIAV). The Extracellular segment spans residues 732–742 (FEDRIQLDLGY).

This sequence belongs to the ZIP transporter (TC 2.A.5) family. Post-translationally, cleaved on the N-terminus before locating to the plasma membrane. In terms of processing, N-glycosylated.

Its subcellular location is the cell membrane. The enzyme catalyses Zn(2+)(in) = Zn(2+)(out). In terms of biological role, acts as a zinc-influx transporter which plays a role in zinc homeostasis and in the induction of epithelial-to-mesenchymal transition (EMT). The polypeptide is Zinc transporter ZIP6 (Danio rerio (Zebrafish)).